The chain runs to 620 residues: Chaperone protein DnaK (620 aa).

The residue at position 197 (T197) is a Phosphothreonine; by autocatalysis. The segment at 597-620 (AMANKNNAEQPKKKDDDVIDAEVE) is disordered.

It belongs to the heat shock protein 70 family.

Its function is as follows. Acts as a chaperone. In Helicobacter pylori (strain G27), this protein is Chaperone protein DnaK.